We begin with the raw amino-acid sequence, 2324 residues long: Serine/threonine-protein kinase MEC1 (2324 aa).

The region spanning 1349–1901 (VLAQKSLETN…LWYITVLLNS (553 aa)) is the FAT domain. The PI3K/PI4K catalytic domain occupies 2005–2308 (FTPHYKVYSS…QVDTVVQQAS (304 aa)). The G-loop stretch occupies residues 2011–2017 (VYSSLKK). A catalytic loop region spans residues 2177–2185 (GLGDRHLEN). Residues 2197-2221 (HVDFDCLFEKGKTLPVPEIVPFRLT) are activation loop. An FATC domain is found at 2292–2324 (LPLSVPGQVDTVVQQASSDENLAQMYIGWLPFW).

Belongs to the PI3/PI4-kinase family. ATM subfamily.

It localises to the nucleus. The catalysed reaction is L-seryl-[protein] + ATP = O-phospho-L-seryl-[protein] + ADP + H(+). It catalyses the reaction L-threonyl-[protein] + ATP = O-phospho-L-threonyl-[protein] + ADP + H(+). Serine/threonine protein kinase which activates checkpoint signaling upon genotoxic stresses such as ionizing radiation (IR), ultraviolet light (UV), or DNA replication stalling, thereby acting as a DNA damage sensor. Recognizes the substrate consensus sequence [ST]-Q. Recruited to DNA lesions in order to initiate the DNA repair by homologous recombination. Phosphorylates histone H2A to form H2AS128ph (gamma-H2A) at sites of DNA damage, also involved in the regulation of DNA damage response mechanism. Required for cell growth and meiotic recombination. The polypeptide is Serine/threonine-protein kinase MEC1 (MEC1) (Eremothecium gossypii (strain ATCC 10895 / CBS 109.51 / FGSC 9923 / NRRL Y-1056) (Yeast)).